The sequence spans 98 residues: U-megalopygitoxin(1)-Mo1 (98 aa).

The first 17 residues, 1 to 17, serve as a signal peptide directing secretion; sequence MYRETFVFCVLLAVVSA.

Belongs to the caterpillar 1 family. Contains 4 disulfide bonds. As to expression, expressed by the venom apparatus.

Its subcellular location is the secreted. Functionally, probable toxin. The protein is U-megalopygitoxin(1)-Mo1 of Megalopyge opercularis (Southern flannel moth).